Consider the following 379-residue polypeptide: Cytochrome b (379 aa).

The next 4 membrane-spanning stretches (helical) occupy residues 33 to 53, 77 to 98, 113 to 133, and 178 to 198; these read FGSL…FLAM, WLIR…FIHV, WNIG…GYVL, and FFAF…VHLL. 2 residues coordinate heme b: His-83 and His-97. Positions 182 and 196 each coordinate heme b. His-201 contacts a ubiquinone. The next 4 membrane-spanning stretches (helical) occupy residues 226 to 246, 288 to 308, 320 to 340, and 347 to 367; these read TKDL…ALFF, LGGV…PLLN, ITQV…WIGG, and FTMI…ILIP.

The protein belongs to the cytochrome b family. The cytochrome bc1 complex contains 11 subunits: 3 respiratory subunits (MT-CYB, CYC1 and UQCRFS1), 2 core proteins (UQCRC1 and UQCRC2) and 6 low-molecular weight proteins (UQCRH/QCR6, UQCRB/QCR7, UQCRQ/QCR8, UQCR10/QCR9, UQCR11/QCR10 and a cleavage product of UQCRFS1). This cytochrome bc1 complex then forms a dimer. The cofactor is heme b.

It localises to the mitochondrion inner membrane. In terms of biological role, component of the ubiquinol-cytochrome c reductase complex (complex III or cytochrome b-c1 complex) that is part of the mitochondrial respiratory chain. The b-c1 complex mediates electron transfer from ubiquinol to cytochrome c. Contributes to the generation of a proton gradient across the mitochondrial membrane that is then used for ATP synthesis. In Akodon spegazzinii (Spegazzini's grass mouse), this protein is Cytochrome b (MT-CYB).